Reading from the N-terminus, the 433-residue chain is 3-phosphoshikimate 1-carboxyvinyltransferase (433 aa).

The 3-phosphoshikimate site is built by K23, S24, and R28. Position 23 (K23) interacts with phosphoenolpyruvate. G95 and R123 together coordinate phosphoenolpyruvate. Positions 167, 169, 317, and 344 each coordinate 3-phosphoshikimate. Q169 provides a ligand contact to phosphoenolpyruvate. D317 (proton acceptor) is an active-site residue. Residues R348 and R390 each contribute to the phosphoenolpyruvate site.

It belongs to the EPSP synthase family. As to quaternary structure, monomer.

The protein localises to the cytoplasm. The enzyme catalyses 3-phosphoshikimate + phosphoenolpyruvate = 5-O-(1-carboxyvinyl)-3-phosphoshikimate + phosphate. The protein operates within metabolic intermediate biosynthesis; chorismate biosynthesis; chorismate from D-erythrose 4-phosphate and phosphoenolpyruvate: step 6/7. Its function is as follows. Catalyzes the transfer of the enolpyruvyl moiety of phosphoenolpyruvate (PEP) to the 5-hydroxyl of shikimate-3-phosphate (S3P) to produce enolpyruvyl shikimate-3-phosphate and inorganic phosphate. This is 3-phosphoshikimate 1-carboxyvinyltransferase from Staphylococcus epidermidis (strain ATCC 35984 / DSM 28319 / BCRC 17069 / CCUG 31568 / BM 3577 / RP62A).